We begin with the raw amino-acid sequence, 441 residues long: MSGSPYASPSEADTDAMLDAVGVDRVDELFDIPPEVSFDGEFGIDAKSEQAALRGVRRRLSDNDDLTEFLGRGHYEHYVPSLVDSVSQRSEFITSYTQYQPEITQGFLQVLFEYQSLLVELTGLGVANCSMYDAATALAEAALLAKRVRAADGNRVLVPGFVRDSHVDVLRNYTSGSDVVVERYATDAGNVDLDALEAAMDADVVMVYAENPTTCGTVEEQLCAVGDLADSHDALFCLGSDPVAMSILQRPVDVGADVVVGDASVLGMPTSYGTGLGVFATRKEFLRQVPGRLVGASEDDAGTRAFTLTLQTREQHIRKERATSNICTNQAWVALRAAIHAAWLGADGLVDLAERMVELPRDLAARLDDVSGVTAPVHDDRHHIREFQARTEQPAPAVASALEAEGFGVHAVDDHTIQVCVTDANEHATDAFVAAVREVSE.

Belongs to the GcvP family. N-terminal subunit subfamily. As to quaternary structure, the glycine cleavage system is composed of four proteins: P, T, L and H. In this organism, the P 'protein' is a heterodimer of two subunits.

It carries out the reaction N(6)-[(R)-lipoyl]-L-lysyl-[glycine-cleavage complex H protein] + glycine + H(+) = N(6)-[(R)-S(8)-aminomethyldihydrolipoyl]-L-lysyl-[glycine-cleavage complex H protein] + CO2. The glycine cleavage system catalyzes the degradation of glycine. The P protein binds the alpha-amino group of glycine through its pyridoxal phosphate cofactor; CO(2) is released and the remaining methylamine moiety is then transferred to the lipoamide cofactor of the H protein. The polypeptide is Probable glycine dehydrogenase (decarboxylating) subunit 1 (Halobacterium salinarum (strain ATCC 700922 / JCM 11081 / NRC-1) (Halobacterium halobium)).